We begin with the raw amino-acid sequence, 212 residues long: MKVFKFIGLMILLTSAFSAGSGQSPMTVLCSIDWFMVTVHPFMLNNDVCVHFHELHLGLGCPPNHVQPHAYQFTYRVTECGIRAKAVSQDMVIYSTEIHYSSKGTPSKFVIPVSCAAPQKSPWLTKPCSMRVASKSRATAQKDEKCYEVFSLSQSSQRPNCDCPPCVFSEEEHTQVPCHQAGAQEAQPLQPSHFLDISEDWSLHTDDMIGSM.

An N-terminal signal peptide occupies residues 1–22 (MKVFKFIGLMILLTSAFSAGSG).

It belongs to the PLAC1 family. In terms of tissue distribution, expressed in placenta. Localizes primarily to differentiated syncytiotrophoblast throughout gestation as well as to a small population of villous cytotrophoblasts. Also detected in maternal blood and rapidly disappears following delivery, but is not detected in other adult or fetal tissues examined.

Its subcellular location is the secreted. In terms of biological role, may play a role in placental development. In Homo sapiens (Human), this protein is Placenta-specific protein 1.